The chain runs to 236 residues: MRRILSILVFAIMLAGCSSNASTEKQHAGGEKTVKAEPQSTSSQKDSTDDYQPNSQVTDDRTLHKVGQTFSDDKGKAVLKDIKQVNKTYKIGDVELTVKEMKLIHLRPDYSMIDYFHELTHDEEFDFVKVFVDIKNTSTKKVNVAPIALMKTNTGETFDWNKDIYLEELNGELEGGAEKSGNLGFIVNASSGHAHDKAADAEKKTKEIKWIEITTSDVFDHNHKKISDAQKIKIKF.

A signal peptide spans M1 to T23. The interval S22 to T62 is disordered. The segment covering E24–K35 has biased composition (basic and acidic residues).

This is an uncharacterized protein from Bacillus subtilis (strain 168).